A 391-amino-acid polypeptide reads, in one-letter code: Formate-dependent phosphoribosylglycinamide formyltransferase (391 aa).

N(1)-(5-phospho-beta-D-ribosyl)glycinamide is bound by residues 20–21 (EL) and glutamate 80. ATP contacts are provided by residues arginine 112, lysine 153, 158 to 163 (SSGKGQ), 193 to 196 (EGFI), and glutamate 201. The 190-residue stretch at 117–306 (RLAAETLGLP…EFALHVRAIQ (190 aa)) folds into the ATP-grasp domain. Mg(2+) is bound by residues glutamate 265 and glutamate 277. Residues aspartate 284, lysine 354, and 361 to 362 (RR) contribute to the N(1)-(5-phospho-beta-D-ribosyl)glycinamide site.

The protein belongs to the PurK/PurT family. As to quaternary structure, homodimer.

It catalyses the reaction N(1)-(5-phospho-beta-D-ribosyl)glycinamide + formate + ATP = N(2)-formyl-N(1)-(5-phospho-beta-D-ribosyl)glycinamide + ADP + phosphate + H(+). It participates in purine metabolism; IMP biosynthesis via de novo pathway; N(2)-formyl-N(1)-(5-phospho-D-ribosyl)glycinamide from N(1)-(5-phospho-D-ribosyl)glycinamide (formate route): step 1/1. In terms of biological role, involved in the de novo purine biosynthesis. Catalyzes the transfer of formate to 5-phospho-ribosyl-glycinamide (GAR), producing 5-phospho-ribosyl-N-formylglycinamide (FGAR). Formate is provided by PurU via hydrolysis of 10-formyl-tetrahydrofolate. The protein is Formate-dependent phosphoribosylglycinamide formyltransferase of Shewanella baltica (strain OS185).